A 196-amino-acid chain; its full sequence is Putative acetyltransferase YJL218W (196 aa).

Asn84 contacts acetyl-CoA. His114 functions as the Proton donor/acceptor in the catalytic mechanism. Acetyl-CoA-binding positions include Gly141, Ala159, 164 to 165 (IR), Lys179, and Arg182.

Belongs to the transferase hexapeptide repeat family. Homodimer.

The protein is Putative acetyltransferase YJL218W of Saccharomyces cerevisiae (strain ATCC 204508 / S288c) (Baker's yeast).